The chain runs to 601 residues: Protein FREE1 (601 aa).

Positions 1-240 are disordered; it reads MQQGDYNSYY…SGEYPAFEDS (240 aa). Positions 21–35 are enriched in pro residues; sequence TPNPNPNPNPSPPAP. Composition is skewed to polar residues over residues 63-79 and 125-155; these read DYSNYSQNYTPYGQNSE and LSSYGSFDSTAPYQQPTSQHMYYSPYDQHQT. Residues 161-175 show a composition bias toward pro residues; the sequence is APPPSSAPAPNPNPA. Over residues 176-197 the composition is skewed to low complexity; it reads PYSSSLYSAPPYSSGGSSIPPS. Positions 214–231 are enriched in basic and acidic residues; it reads NRSRSDLGSDLYGKRSDS. At Ser-218 the chain carries Phosphoserine. The segment at 338–344 is nuclear export signal; it reads LDGLRML. Residues 455 to 515 form an FYVE-type zinc finger; sequence DEAVSKCTSC…VCDRCMAEVS (61 aa). Zn(2+)-binding residues include Cys-461, Cys-464, Cys-477, Cys-480, Cys-485, Cys-488, Cys-507, and Cys-510. Residues 527–552 adopt a coiled-coil conformation; it reads RNVSLQSHEDLARKLQEEMERNRKSS. 2 positions are modified to phosphoserine: Ser-530 and Ser-533. The interval 542-561 is disordered; the sequence is QEEMERNRKSSSGLREGSGR.

As to quaternary structure, part of the ESCRT-I complex. Interacts with VPS23A and VPS23B, but not with VPS28 or VPS37. Interacts with IRT1. Interacts with SH3P2. Interacts with SH3P3, but not with SH3P1. Interacts (via N-terminus) with PYL4 and PYR3. Interacts (via C-terminus) with SNRK2D/SNRK2.2, SNRK2I/SNRK2.3, ABF4 and ABI5. Interacts with SINAT1, SINAT2, SINAT3 and SINAT4. Interacts with SINAT5. Component of a phosphoinositide 3-kinase (PI3K) complex containing ATG6, SH3P2 and FREE1. In terms of processing, phosphorylated at Ser-530 and Ser-533 by SNRK2D/SNRK2.2 and SNRK2I/SNRK2.3 in response to abscisic acid (ABA). Phosphorylation is necessary for ABA-induced FREE1 nuclear import. Post-translationally, ubiquitinated by SINAT1, SINAT2, SINAT3 and SINAT4 for subsequent proteasomal degradation. Ubiquitous. Lowest expression in mature seeds.

Its subcellular location is the cytoplasm. The protein localises to the prevacuolar compartment membrane. It localises to the late endosome. The protein resides in the endosome. It is found in the multivesicular body. Its subcellular location is the nucleus. Endosomal sorting complex required for transport (ESCRT) component regulating multivesicular body (MVB) protein sorting and plant growth. Required for the formation of intra-luminal vesicles (ILVs)in MVBs. Binds to phosphatidylinositol-3-phosphate (PI3P) and ubiquitin. Controls IRT1 recycling to the plasma membrane and impacts the polar delivery of this transporter to the outer plasma membrane domain. Regulates ubiquitin-dependent membrane protein degradation, vacuolar transport, autophagy, and vacuole biogenesis. ESCRT component that binds ubiquitin and regulates vacuolar sorting of proteins. Attenuates abscisic acid (ABA) signaling through RSL1-triggered degradation of the ABA receptors PYR1 and PYL4. Interacts with PYL4 and PYR1, and delivers the ubiquitinated ABA receptors as cargo to the vacuolar degradation pathway. In response to ABA, is phosphorylated by SnRK2 kinases which mediate FREE1 nuclear import. In the nucleus, interacts with the ABA-responsive transcription factors ABF4 and ABI5 to reduce their ability to bind to their cis-regulatory sequences of downstream genes, thus leading to transcriptional inhibition of ABA signaling pathway. Negatively regulates salt stress tolerance via a negative feedback loop involving ABA signaling pathway. This is Protein FREE1 from Arabidopsis thaliana (Mouse-ear cress).